Here is a 208-residue protein sequence, read N- to C-terminus: MKIVEIKHPLVRHKLGLMRICDISTKRFRELSSELGSLLTYVATDDLEVEIVTIKGWCGLVKIARIKGKKITVVPILRAGLGMMNGVLEHLPSARISIIGIYRNEITFEPIPYFHKLVSNINERMAMVLDPMLATGGSIIATIDLLKKFGCNNIKVLSIVAAPEGIKALEEKHPDIELYLASIDQKINKNGYIIPGFGDAGDKTFGTK.

Residues Arg-78, Arg-103, and 130-138 each bind 5-phospho-alpha-D-ribose 1-diphosphate; that span reads DPMLATGGS. Residues Ile-193 and 198–200 contribute to the uracil site; that span reads GDA. Position 199 (Asp-199) interacts with 5-phospho-alpha-D-ribose 1-diphosphate.

The protein belongs to the UPRTase family. The cofactor is Mg(2+).

It catalyses the reaction UMP + diphosphate = 5-phospho-alpha-D-ribose 1-diphosphate + uracil. It functions in the pathway pyrimidine metabolism; UMP biosynthesis via salvage pathway; UMP from uracil: step 1/1. With respect to regulation, allosterically activated by GTP. Catalyzes the conversion of uracil and 5-phospho-alpha-D-ribose 1-diphosphate (PRPP) to UMP and diphosphate. The chain is Uracil phosphoribosyltransferase from Blochmanniella pennsylvanica (strain BPEN).